An 88-amino-acid polypeptide reads, in one-letter code: Small ribosomal subunit protein bS20 (88 aa).

Positions 1–21 are enriched in basic residues; that stretch reads MANSKSAKKRALQSEKRRQHN. The segment at 1-27 is disordered; sequence MANSKSAKKRALQSEKRRQHNASRSSM.

This sequence belongs to the bacterial ribosomal protein bS20 family.

In terms of biological role, binds directly to 16S ribosomal RNA. The sequence is that of Small ribosomal subunit protein bS20 from Shewanella piezotolerans (strain WP3 / JCM 13877).